The chain runs to 147 residues: MPGSKSPRGMFAARKLELKRKKFRWSDLEYKRRILQLKKKVDPLEGAPQARGIVVEKVGIESRQPNSAVRKCVRVQLLKNGKVVTAFLPGDGALLFVNEHDEVVIEGIGGPEGRAYGDLPGVRWKVIKVNGVSLKEILRGRKQKPTR.

Belongs to the universal ribosomal protein uS12 family. In terms of assembly, part of the 30S ribosomal subunit.

In terms of biological role, with S4 and S5 plays an important role in translational accuracy. Located at the interface of the 30S and 50S subunits. This Thermofilum pendens (strain DSM 2475 / Hrk 5) protein is Small ribosomal subunit protein uS12.